The sequence spans 387 residues: Probable tRNA sulfurtransferase (387 aa).

The region spanning 67-167 (SLLKNLFTRL…KEHFLIISES (101 aa)) is the THUMP domain. ATP contacts are provided by residues 185–186 (LL), 210–211 (TF), arginine 269, glycine 287, and glutamine 296.

The protein belongs to the ThiI family.

Its subcellular location is the cytoplasm. It catalyses the reaction [ThiI sulfur-carrier protein]-S-sulfanyl-L-cysteine + a uridine in tRNA + 2 reduced [2Fe-2S]-[ferredoxin] + ATP + H(+) = [ThiI sulfur-carrier protein]-L-cysteine + a 4-thiouridine in tRNA + 2 oxidized [2Fe-2S]-[ferredoxin] + AMP + diphosphate. It carries out the reaction [ThiS sulfur-carrier protein]-C-terminal Gly-Gly-AMP + S-sulfanyl-L-cysteinyl-[cysteine desulfurase] + AH2 = [ThiS sulfur-carrier protein]-C-terminal-Gly-aminoethanethioate + L-cysteinyl-[cysteine desulfurase] + A + AMP + 2 H(+). It functions in the pathway cofactor biosynthesis; thiamine diphosphate biosynthesis. Functionally, catalyzes the ATP-dependent transfer of a sulfur to tRNA to produce 4-thiouridine in position 8 of tRNAs, which functions as a near-UV photosensor. Also catalyzes the transfer of sulfur to the sulfur carrier protein ThiS, forming ThiS-thiocarboxylate. This is a step in the synthesis of thiazole, in the thiamine biosynthesis pathway. The sulfur is donated as persulfide by IscS. The chain is Probable tRNA sulfurtransferase from Mycoplasma pneumoniae (strain ATCC 29342 / M129 / Subtype 1) (Mycoplasmoides pneumoniae).